A 180-amino-acid chain; its full sequence is Crossover junction endodeoxyribonuclease RuvC (180 aa).

Residues D13, E73, and D145 contribute to the active site. Residues D13, E73, and D145 each coordinate Mg(2+).

This sequence belongs to the RuvC family. In terms of assembly, homodimer which binds Holliday junction (HJ) DNA. The HJ becomes 2-fold symmetrical on binding to RuvC with unstacked arms; it has a different conformation from HJ DNA in complex with RuvA. In the full resolvosome a probable DNA-RuvA(4)-RuvB(12)-RuvC(2) complex forms which resolves the HJ. Mg(2+) serves as cofactor.

Its subcellular location is the cytoplasm. It carries out the reaction Endonucleolytic cleavage at a junction such as a reciprocal single-stranded crossover between two homologous DNA duplexes (Holliday junction).. The RuvA-RuvB-RuvC complex processes Holliday junction (HJ) DNA during genetic recombination and DNA repair. Endonuclease that resolves HJ intermediates. Cleaves cruciform DNA by making single-stranded nicks across the HJ at symmetrical positions within the homologous arms, yielding a 5'-phosphate and a 3'-hydroxyl group; requires a central core of homology in the junction. The consensus cleavage sequence is 5'-(A/T)TT(C/G)-3'. Cleavage occurs on the 3'-side of the TT dinucleotide at the point of strand exchange. HJ branch migration catalyzed by RuvA-RuvB allows RuvC to scan DNA until it finds its consensus sequence, where it cleaves and resolves the cruciform DNA. The chain is Crossover junction endodeoxyribonuclease RuvC from Magnetococcus marinus (strain ATCC BAA-1437 / JCM 17883 / MC-1).